The following is a 319-amino-acid chain: Homoserine O-acetyltransferase (319 aa).

Cysteine 142 (acyl-thioester intermediate) is an active-site residue. Substrate is bound by residues lysine 163 and serine 192. The Proton acceptor role is filled by histidine 235. The active site involves glutamate 237. Arginine 249 lines the substrate pocket.

It belongs to the MetA family.

The protein localises to the cytoplasm. The catalysed reaction is L-homoserine + acetyl-CoA = O-acetyl-L-homoserine + CoA. The protein operates within amino-acid biosynthesis; L-methionine biosynthesis via de novo pathway; O-acetyl-L-homoserine from L-homoserine: step 1/1. Transfers an acetyl group from acetyl-CoA to L-homoserine, forming acetyl-L-homoserine. The protein is Homoserine O-acetyltransferase of Lactococcus lactis subsp. cremoris (strain MG1363).